The primary structure comprises 530 residues: Sugar transport protein MST6 (530 aa).

Residues 1 to 18 lie on the Cytoplasmic side of the membrane; that stretch reads MAGGVVVNNGGGKDYPGK. A helical membrane pass occupies residues 19 to 39; the sequence is LTMFVLFACIVAATGGLIFGY. Over 40–81 the chain is Extracellular; sequence DIGISGGVTSMNPFLIKFFPSVYRKEQAAEKNQSNQYCKFDS. The chain crosses the membrane as a helical span at residues 82-102; that stretch reads PLLTMFTSSLYLAALVASFFA. Over 103–119 the chain is Cytoplasmic; the sequence is STVTRVAGRKWSMFGGG. A helical membrane pass occupies residues 120–140; the sequence is VTFLVGAALNGAAKNVLMLIL. Residues 141–142 are Extracellular-facing; the sequence is GR. The chain crosses the membrane as a helical span at residues 143 to 163; it reads VLLGVGVGFANQSVPLYLSEM. At 164 to 169 the chain is on the cytoplasmic side; that stretch reads APARLR. Residues 170 to 190 traverse the membrane as a helical segment; that stretch reads GMLNIGFQLMITIGILCANLI. Over 191–204 the chain is Extracellular; the sequence is NYGTAKIKGGWGWR. The chain crosses the membrane as a helical span at residues 205-225; it reads VSLALAAVPAAIIAVGALFLP. At 226-291 the chain is on the cytoplasmic side; that stretch reads DTPNSLIDRG…YRPQLTMAIA (66 aa). The helical transmembrane segment at 292-312 threads the bilayer; the sequence is IPLFQQLTGINVIMFYAPVLF. Topologically, residues 313–323 are extracellular; it reads KTLGFADDASL. The helical transmembrane segment at 324–344 threads the bilayer; that stretch reads MSAVITGLVNVFATFVSIVTV. Residues 345–359 are Cytoplasmic-facing; the sequence is DRLGRRKLFLQGGTQ. Residues 360–380 traverse the membrane as a helical segment; that stretch reads MLACQIVVGSLIGAKFGFSGV. Topologically, residues 381–388 are extracellular; sequence ADIPKAYA. A helical membrane pass occupies residues 389-409; that stretch reads AFVVLFICAYVAGFAWSWGPL. The Cytoplasmic segment spans residues 410–428; the sequence is GWLVPSEIFPLEIRSAGQS. A helical membrane pass occupies residues 429-449; that stretch reads INVSVNMLFTFIIAQAFLPML. Topologically, residues 450-453 are extracellular; that stretch reads CRFK. A helical transmembrane segment spans residues 454 to 474; that stretch reads FILFFFFGAWVVIMTLFVAFF. Residues 475 to 530 lie on the Cytoplasmic side of the membrane; the sequence is LPETKNVPIEEMVLVWKSHWYWGRFIRDEDVHVGADVEMPAAGNRNGKVDPAKLAN.

This sequence belongs to the major facilitator superfamily. Sugar transporter (TC 2.A.1.1) family. Expressed in leaf blades, leaf sheaths, anthers, ovaries and embryos. Expressed at low levels in roots and shoots.

The protein resides in the cell membrane. Its function is as follows. Mediates active uptake of hexoses by sugar:proton symport. Can transport glucose, fructose, mannose, galactose, xylose and ribose. This Oryza sativa subsp. japonica (Rice) protein is Sugar transport protein MST6.